Consider the following 503-residue polypeptide: Putative acyl--CoA ligase YdaB (503 aa).

Belongs to the ATP-dependent AMP-binding enzyme family.

The chain is Putative acyl--CoA ligase YdaB (ydaB) from Bacillus subtilis (strain 168).